A 327-amino-acid polypeptide reads, in one-letter code: Aspartate--ammonia ligase (327 aa).

It belongs to the class-II aminoacyl-tRNA synthetase family. AsnA subfamily.

It is found in the cytoplasm. The catalysed reaction is L-aspartate + NH4(+) + ATP = L-asparagine + AMP + diphosphate + H(+). It functions in the pathway amino-acid biosynthesis; L-asparagine biosynthesis; L-asparagine from L-aspartate (ammonia route): step 1/1. The polypeptide is Aspartate--ammonia ligase (Bacillus cereus (strain ATCC 10987 / NRS 248)).